Reading from the N-terminus, the 614-residue chain is Signal recognition particle receptor subunit alpha homolog (614 aa).

Residues 119 to 244 (EASAKQVKAP…DRSRDSPDDV (126 aa)) form a disordered region. Over residues 149–160 (QDDKKPVEKRVN) the composition is skewed to basic and acidic residues. A compositionally biased stretch (pro residues) spans 164–178 (APPPSKSQPSSPPTG). The segment covering 232–241 (ALLDRSRDSP) has biased composition (basic and acidic residues). Phosphoserine occurs at positions 237 and 240. Tyrosine 246 bears the Phosphotyrosine mark. Phosphoserine occurs at positions 268, 278, and 279. The span at 268–285 (SEDEADNEDASSEGEAEE) shows a compositional bias: acidic residues. The disordered stretch occupies residues 268–290 (SEDEADNEDASSEGEAEEQVQSK). Residues 396–613 (YTIIFCGVNG…NVNAVVNSLM (218 aa)) form an NG domain region. GTP contacts are provided by residues 402-409 (GVNGVGKS), 497-501 (DTAGR), and 565-568 (TKFD).

This sequence belongs to the GTP-binding SRP family. Heterodimer of SrpRalpha and SrpRbeta. As to expression, in 8-9 hours embryos, expression is seen in a segmental pattern along embryonic ventral midline.

It localises to the endoplasmic reticulum membrane. Its function is as follows. Component of the SRP (signal recognition particle) receptor. Ensures, in conjunction with the signal recognition particle, the correct targeting of the nascent secretory proteins to the endoplasmic reticulum membrane system. Forms a guanosine 5'-triphosphate (GTP)-dependent complex with the SRP subunit Srp54. SRP receptor compaction and GTPase rearrangement drive SRP-mediated cotranslational protein translocation into the ER. May have a role in axonogenesis. This chain is Signal recognition particle receptor subunit alpha homolog, found in Drosophila melanogaster (Fruit fly).